Consider the following 198-residue polypeptide: Transcription factor FapR (198 aa).

Positions 102-167 (TRIARGHHLF…HGRTIVEVNS (66 aa)) constitute a MaoC-like domain.

This sequence belongs to the FapR family.

Functionally, transcriptional factor involved in regulation of membrane lipid biosynthesis by repressing genes involved in fatty acid and phospholipid metabolism. This Geobacillus kaustophilus (strain HTA426) protein is Transcription factor FapR.